The primary structure comprises 370 residues: Early nodulin-like protein 1 (370 aa).

Residues 1-27 (MSAIMKSLCFSFLILASFATFFSVADA) form the signal peptide. Residues 28 to 129 (WRFNVGGNGA…GQKLIVVVLA (102 aa)) enclose the Phytocyanin domain. N58 carries N-linked (GlcNAc...) asparagine glycosylation. A disulfide bridge connects residues C83 and C117. The segment covering 135–175 (SAPAHSPVPSVSPTQPPKSHSPVSPVAPASAPSKSQPPRSS) has biased composition (low complexity). A disordered region spans residues 135–347 (SAPAHSPVPS…PAPSPRTNSA (213 aa)). Positions 176–194 (VSPAQPPKSSSPISHTPAL) are enriched in polar residues. Composition is skewed to low complexity over residues 195 to 205 (SPSHATSHSPA) and 215 to 290 (SPVS…QSPA). Residues 291-305 (TPSPMTPQSPSPVSS) are compositionally biased toward pro residues. The span at 306–318 (PSPDQSAAPSDQS) shows a compositional bias: low complexity. Polar residues predominate over residues 319 to 334 (TPLAPSPSETTPTADN). N334 carries N-linked (GlcNAc...) asparagine glycosylation. Residue N345 is the site of GPI-anchor amidated asparagine attachment. A propeptide spans 346 to 370 (SASGLAVTSVMSTLFSATFTFLMFA) (removed in mature form).

This sequence belongs to the early nodulin-like (ENODL) family. As to expression, mostly expressed in stems, leaves and flowers, and, to a lower extent, in seedlings, roots and seeds.

It localises to the cell membrane. In terms of biological role, may act as a carbohydrate transporter. In Arabidopsis thaliana (Mouse-ear cress), this protein is Early nodulin-like protein 1.